We begin with the raw amino-acid sequence, 139 residues long: D-ribose pyranase (139 aa).

H20 functions as the Proton donor in the catalytic mechanism. Substrate-binding positions include D28, H106, and 128–130 (YAN).

This sequence belongs to the RbsD / FucU family. RbsD subfamily. In terms of assembly, homodecamer.

It is found in the cytoplasm. The catalysed reaction is beta-D-ribopyranose = beta-D-ribofuranose. The protein operates within carbohydrate metabolism; D-ribose degradation; D-ribose 5-phosphate from beta-D-ribopyranose: step 1/2. In terms of biological role, catalyzes the interconversion of beta-pyran and beta-furan forms of D-ribose. The polypeptide is D-ribose pyranase (Pasteurella multocida (strain Pm70)).